A 384-amino-acid polypeptide reads, in one-letter code: Zinc finger CCCH domain-containing protein 12 (384 aa).

Disordered stretches follow at residues 1-32 (MSHHRRDSGGDVVHVIPTNNPPPDNWFPNLGD) and 46-81 (WAMNPDNTSGDNNGPPNKKTRGSPSSSSATTTSAAS). The segment covering 50 to 60 (PDNTSGDNNGP) has biased composition (polar residues). Over residues 70–81 (SSSSATTTSAAS) the composition is skewed to low complexity. 2 C3H1-type zinc fingers span residues 91-118 (FFKTKLCCKFRAGTCPYITNCNFAHTVE) and 172-200 (SFKGRHCKKFYTEEGCPYGESCTFLHDEA). The segment at 211-231 (LGPGGYGSGGGGGSGGGSVGG) is disordered. The segment covering 212-231 (GPGGYGSGGGGGSGGGSVGG) has biased composition (gly residues). A C3H1-type 3 zinc finger spans residues 260 to 288 (NWKTRICNKWEITGYCPFGAKCHFAHGAA). The segment at 299 to 335 (EEEGKDGVSPNPDTKQTVQNPKGLSDTTTLLSPGVPH) is disordered. The span at 309–329 (NPDTKQTVQNPKGLSDTTTLL) shows a compositional bias: polar residues.

The protein is Zinc finger CCCH domain-containing protein 12 of Arabidopsis thaliana (Mouse-ear cress).